The primary structure comprises 422 residues: 5-hydroxytryptamine receptor 1A (422 aa).

Positions 1 to 23 (MDVLSPGQGNNTTSPPAPFETGG) are disordered. Over 1-38 (MDVLSPGQGNNTTSPPAPFETGGNTTGISDVTFSYQVI) the chain is Extracellular. N-linked (GlcNAc...) asparagine glycosylation is found at asparagine 10, asparagine 11, and asparagine 24. A helical membrane pass occupies residues 39–59 (TSLLLGTLIFCAVLGNACVVA). Topologically, residues 60–73 (AIALERSLQNVANY) are cytoplasmic. A helical membrane pass occupies residues 74–98 (LIGSLAVTDLMVSVLVLPMAALYQV). At 99–107 (LNKWTLGQV) the chain is on the extracellular side. Residues 108–132 (TCDLFIALDVLCCTSSILHLCAIAL) form a helical membrane-spanning segment. Cysteine 109 and cysteine 187 are oxidised to a cystine. Aspartate 116 and cysteine 120 together coordinate serotonin. Positions 133–135 (DRY) match the DRY motif; important for ligand-induced conformation changes motif. Topologically, residues 133-152 (DRYWAITDPIDYVNKRTPRR) are cytoplasmic. Residues 153–174 (AAALISLTWLIGFLISIPPMLG) traverse the membrane as a helical segment. The Extracellular portion of the chain corresponds to 175–193 (WRTPEDRSDPDACTISKDH). Residues 194–216 (GYTIYSTFGAFYIPLLLMLVLYG) traverse the membrane as a helical segment. The Cytoplasmic portion of the chain corresponds to 217–346 (RIFRAARFRI…LARERKTVKT (130 aa)). Residues 235–263 (KTGADTHHGASPAPQPKKSVNGESGSRNW) are disordered. Threonine 314, lysine 345, threonine 346, and glycine 352 together coordinate 1D-myo-inositol 4-phosphate. A helical transmembrane segment spans residues 347-370 (LGIIMGTFILCWLPFFIVALVLPF). Over 371–378 (CESSCHMP) the chain is Extracellular. Residues 379 to 403 (TLLGAIINWLGYSNSLLNPVIYAYF) traverse the membrane as a helical segment. The short motif at 396-400 (NPVIY) is the NPxxY motif; important for ligand-induced conformation changes and signaling element. Positions 403, 404, and 405 each coordinate 1D-myo-inositol 4-phosphate. Residues 404–422 (NKDFQNAFKKIIKCKFCRQ) are Cytoplasmic-facing.

Belongs to the G-protein coupled receptor 1 family. 5-hydroxytryptamine receptor subfamily. HTR1A sub-subfamily. As to quaternary structure, heterodimer; heterodimerizes with GPER1. Interacts with YIF1B. Interacts with GPR39 and GALR1.

It localises to the cell membrane. The protein localises to the cell projection. Its subcellular location is the dendrite. With respect to regulation, G-protein coupled receptor activity is regulated by lipids: phosphatidylinositol 4-phosphate increases HTR1A-mediated activity. G-protein coupled receptor for 5-hydroxytryptamine (serotonin). Also functions as a receptor for various drugs and psychoactive substances. Ligand binding causes a conformation change that triggers signaling via guanine nucleotide-binding proteins (G proteins) and modulates the activity of downstream effectors, such as adenylate cyclase. HTR1A is coupled to G(i)/G(o) G alpha proteins and mediates inhibitory neurotransmission: signaling inhibits adenylate cyclase activity and activates a phosphatidylinositol-calcium second messenger system that regulates the release of Ca(2+) ions from intracellular stores. Beta-arrestin family members regulate signaling by mediating both receptor desensitization and resensitization processes. The sequence is that of 5-hydroxytryptamine receptor 1A (HTR1A) from Pongo pygmaeus (Bornean orangutan).